The chain runs to 92 residues: N(2)-fixation sustaining protein CowN (92 aa).

It belongs to the CowN family.

Is required to sustain N(2)-dependent growth in the presence of low levels of carbon monoxide (CO). Probably acts by protecting the N(2) fixation ability of the nitrogenase complex, which is inactivated in the presence of CO. This is N(2)-fixation sustaining protein CowN from Rhodopseudomonas palustris (strain ATCC BAA-98 / CGA009).